The primary structure comprises 48 residues: ATP synthase protein 8 (48 aa).

A helical transmembrane segment spans residues 12-32 (QLTYGLLLITVLLILFSQFFL).

It belongs to the ATPase protein 8 family. As to quaternary structure, F-type ATPases have 2 components, CF(1) - the catalytic core - and CF(0) - the membrane proton channel.

The protein resides in the mitochondrion membrane. Mitochondrial membrane ATP synthase (F(1)F(0) ATP synthase or Complex V) produces ATP from ADP in the presence of a proton gradient across the membrane which is generated by electron transport complexes of the respiratory chain. F-type ATPases consist of two structural domains, F(1) - containing the extramembraneous catalytic core and F(0) - containing the membrane proton channel, linked together by a central stalk and a peripheral stalk. During catalysis, ATP synthesis in the catalytic domain of F(1) is coupled via a rotary mechanism of the central stalk subunits to proton translocation. Part of the complex F(0) domain. Minor subunit located with subunit a in the membrane. The protein is ATP synthase protein 8 (ATP8) of Candida glabrata (strain ATCC 2001 / BCRC 20586 / JCM 3761 / NBRC 0622 / NRRL Y-65 / CBS 138) (Yeast).